A 351-amino-acid polypeptide reads, in one-letter code: Peptidyl-Lys metalloendopeptidase (351 aa).

The N-terminal stretch at 1-22 is a signal peptide; it reads MFSLSSRFFLYSLCLSAVAVSA. Residues 23–183 constitute a propeptide that is removed on maturation; it reads APGLSLSLSG…VARRSNLGKR (161 aa). Disulfide bonds link Cys189–Cys259 and Cys261–Cys281. Residue His301 participates in Zn(2+) binding. The active site involves Glu302. The Zn(2+) site is built by His305 and Asp314.

Belongs to the peptidase M35 family. Requires Zn(2+) as cofactor.

The protein localises to the secreted. The enzyme catalyses Preferential cleavage in proteins: -Xaa-|-Lys- (in which Xaa may be Pro).. Its activity is regulated as follows. Inhibited by chelating agents such as imidazole, alpha,alpha'-bipyridine, and 1,10-phenanthroline. This Armillaria mellea (Honey mushroom) protein is Peptidyl-Lys metalloendopeptidase (MEP).